Here is a 139-residue protein sequence, read N- to C-terminus: UPF0225 protein Bpro_4182 (139 aa).

It belongs to the UPF0225 family.

This is UPF0225 protein Bpro_4182 from Polaromonas sp. (strain JS666 / ATCC BAA-500).